The following is a 269-amino-acid chain: MANYIVGDIQGCFDELMLLLAQCQFDKNQDTLWVAGDLVARGPKSLETLRFIKSLGNSAKVVLGNHDLHLMAVSLGIRNNKAKDKTAPIFASEDGNELLHWLRQQPLLAEHPEFVVCHAGISPQWDLATARLCAEEVESLLRSENYRWLIENMYCNQPDLWQDNLSGLDRYRYIINAFTRMRFCFADGRLDMDCKLPPSEVKESELMPWFTLPQRRALDKPVLFGHWAALEGYISEEVIGLDTGCVWNGSLTMIRWEDKQVFSQKALEN.

Belongs to the Ap4A hydrolase family.

The enzyme catalyses P(1),P(4)-bis(5'-adenosyl) tetraphosphate + H2O = 2 ADP + 2 H(+). Its function is as follows. Hydrolyzes diadenosine 5',5'''-P1,P4-tetraphosphate to yield ADP. This Vibrio vulnificus (strain CMCP6) protein is Bis(5'-nucleosyl)-tetraphosphatase, symmetrical.